Reading from the N-terminus, the 181-residue chain is Early E3 20.3 kDa glycoprotein (181 aa).

Residues Asn29, Asn57, Asn70, and Asn75 are each glycosylated (N-linked (GlcNAc...) asparagine; by host).

It belongs to the adenoviridae E3_20 family.

Its function is as follows. E3 proteins seem to be dispensable for virus growth in tissue culture cells. They are potentially important for virus growth under special conditions; E3 region may help adenoviruses to evade the immune surveillance of the host. In Homo sapiens (Human), this protein is Early E3 20.3 kDa glycoprotein.